A 955-amino-acid chain; its full sequence is 2-oxoglutarate dehydrogenase E1 component (955 aa).

Belongs to the alpha-ketoglutarate dehydrogenase family. In terms of assembly, homodimer. Part of the 2-oxoglutarate dehydrogenase (OGDH) complex composed of E1 (2-oxoglutarate dehydrogenase), E2 (dihydrolipoamide succinyltransferase) and E3 (dihydrolipoamide dehydrogenase); the complex contains multiple copies of the three enzymatic components (E1, E2 and E3). It depends on thiamine diphosphate as a cofactor.

The enzyme catalyses N(6)-[(R)-lipoyl]-L-lysyl-[protein] + 2-oxoglutarate + H(+) = N(6)-[(R)-S(8)-succinyldihydrolipoyl]-L-lysyl-[protein] + CO2. Its function is as follows. E1 component of the 2-oxoglutarate dehydrogenase (OGDH) complex which catalyzes the decarboxylation of 2-oxoglutarate, the first step in the conversion of 2-oxoglutarate to succinyl-CoA and CO(2). This chain is 2-oxoglutarate dehydrogenase E1 component, found in Bacillus cereus (strain B4264).